The sequence spans 656 residues: Sulfate transporter 1.3 (656 aa).

The tract at residues 1-30 is disordered; sequence MSARAHPVDDDGEISPVERSSPRQANTPYV. Topologically, residues 1 to 94 are cytoplasmic; it reads MSARAHPVDD…GRKYNLKLFR (94 aa). The chain crosses the membrane as a helical span at residues 95–115; it reads GDLIAGLTIASLCIPQDIGYA. The Extracellular segment spans residues 116–119; that stretch reads KLAS. A helical transmembrane segment spans residues 120–140; the sequence is LDPKYGLYSSFVPPLVYACMG. At 141 to 144 the chain is on the cytoplasmic side; it reads SSKD. Residues 145–165 traverse the membrane as a helical segment; the sequence is IAIGPVAVVSLLLGTLLRAEI. Residues 166–176 lie on the Extracellular side of the membrane; that stretch reads DPNTNPNEYLR. 2 helical membrane-spanning segments follow: residues 177–197 and 198–218; these read LAFTSTFFAGVTQAALGFFRL and GFLIDFLSHAAVVGFMGGAAI. Residues 219–256 are Extracellular-facing; it reads TIALQQLKGFLGINKFTKKTDIIAVLSSVISSAHHGWN. The chain crosses the membrane as a helical span at residues 257–277; sequence WQTILISASFLIFLLISKFIG. The Cytoplasmic portion of the chain corresponds to 278–283; sequence KRNKKL. The helical transmembrane segment at 284 to 304 threads the bilayer; that stretch reads FWIPAIAPLVSVIISTFFVYI. At 305 to 342 the chain is on the extracellular side; the sequence is TRADKKGVQIVKHLDKGLNPSSLRLIYFSGDYLLKGFR. Residues 343–363 traverse the membrane as a helical segment; that stretch reads IGVVSGMVALTEAVAIGRTFA. Over 364-375 the chain is Cytoplasmic; it reads AMKDYQIDGNKE. The helical transmembrane segment at 376–396 threads the bilayer; it reads MVALGAMNVIGSMTSCYVSTG. The Extracellular portion of the chain corresponds to 397-412; it reads SFSRSAVNFMAGCQTA. A helical membrane pass occupies residues 413 to 433; it reads VSNIIMSIVVLLTLLFLTPLF. Residues 434–441 lie on the Cytoplasmic side of the membrane; sequence KYTPNAIL. Residues 442–462 form a helical membrane-spanning segment; the sequence is AAIIINAVIPLVDVNATILIF. At 463–473 the chain is on the extracellular side; the sequence is KIDKLDFVACM. The helical transmembrane segment at 474–494 threads the bilayer; sequence GAFFGVIFVSVEIGLLIAVGI. Residues 495–656 lie on the Cytoplasmic side of the membrane; it reads SFAKILLQVT…SCSPKLSDEV (162 aa). Positions 525–648 constitute an STAS domain; sequence QYPEATRIPG…LTVAEAVDSC (124 aa).

The protein belongs to the SLC26A/SulP transporter (TC 2.A.53) family. As to expression, expressed in the phloem of cotyledons, hypocotyls and roots.

Its subcellular location is the membrane. Functionally, high-affinity H(+)/sulfate cotransporter that mediates the loading of sulfate into the sieve tube. Plays a central role in the regulation of sulfate assimilation. In Arabidopsis thaliana (Mouse-ear cress), this protein is Sulfate transporter 1.3 (SULTR1;3).